The chain runs to 347 residues: UDP-3-O-acylglucosamine N-acyltransferase (347 aa).

The active-site Proton acceptor is His-241.

It belongs to the transferase hexapeptide repeat family. LpxD subfamily. As to quaternary structure, homotrimer.

It carries out the reaction a UDP-3-O-[(3R)-3-hydroxyacyl]-alpha-D-glucosamine + a (3R)-hydroxyacyl-[ACP] = a UDP-2-N,3-O-bis[(3R)-3-hydroxyacyl]-alpha-D-glucosamine + holo-[ACP] + H(+). The protein operates within bacterial outer membrane biogenesis; LPS lipid A biosynthesis. In terms of biological role, catalyzes the N-acylation of UDP-3-O-acylglucosamine using 3-hydroxyacyl-ACP as the acyl donor. Is involved in the biosynthesis of lipid A, a phosphorylated glycolipid that anchors the lipopolysaccharide to the outer membrane of the cell. The protein is UDP-3-O-acylglucosamine N-acyltransferase of Neisseria gonorrhoeae (strain ATCC 700825 / FA 1090).